We begin with the raw amino-acid sequence, 239 residues long: MKPHLHQISQIKLWAIIPAAGSGSRFSKTALKQYQTIENKTVLEHTVERLNGLTLEGYVLAINEHDHVAQNLPLTQKHKAHFCKGGLERVDSVLNALQYLSSIASDEDYVLVHDAARPCVSLSCLQALAEYAIKYTTNAILAIPVRDTLKQVVDRSHISKTIDRNHLWQAQTPQIAKIGVLKHAIQLALENNIKITDEASALEYAGAVVDVVQGRSDNIKITYQDDLELARLILLSQKS.

This sequence belongs to the IspD/TarI cytidylyltransferase family. IspD subfamily.

It carries out the reaction 2-C-methyl-D-erythritol 4-phosphate + CTP + H(+) = 4-CDP-2-C-methyl-D-erythritol + diphosphate. Its pathway is isoprenoid biosynthesis; isopentenyl diphosphate biosynthesis via DXP pathway; isopentenyl diphosphate from 1-deoxy-D-xylulose 5-phosphate: step 2/6. Functionally, catalyzes the formation of 4-diphosphocytidyl-2-C-methyl-D-erythritol from CTP and 2-C-methyl-D-erythritol 4-phosphate (MEP). The protein is 2-C-methyl-D-erythritol 4-phosphate cytidylyltransferase of Acinetobacter baylyi (strain ATCC 33305 / BD413 / ADP1).